The sequence spans 487 residues: Galactose-1-phosphate uridylyltransferase (487 aa).

It belongs to the galactose-1-phosphate uridylyltransferase type 2 family.

The protein localises to the cytoplasm. It carries out the reaction alpha-D-galactose 1-phosphate + UDP-alpha-D-glucose = alpha-D-glucose 1-phosphate + UDP-alpha-D-galactose. Its pathway is carbohydrate metabolism; galactose metabolism. This chain is Galactose-1-phosphate uridylyltransferase, found in Lactiplantibacillus plantarum (strain ATCC BAA-793 / NCIMB 8826 / WCFS1) (Lactobacillus plantarum).